The sequence spans 1584 residues: Adhesion G protein-coupled receptor B1 (1584 aa).

Residues 1-30 (MRGQAAAPGPVWILAPLLLLLLLLGRRARA) form the signal peptide. Residues 31 to 948 (AAGADAGPGP…ANMEKATLPS (918 aa)) lie on the Extracellular side of the membrane. A glycan (N-linked (GlcNAc...) asparagine) is linked at Asn64. A disordered region spans residues 146-167 (RRQQPPQHDGLRPRAGPPGPTD). Residues 261-315 (TGGWKLWSLWGECTRDCGGGLQTRTRTCLPAPGVEGGGCEGVLEEGRQCNREACG) form the TSP type-1 1 domain. Intrachain disulfides connect Cys273–Cys309, Cys277–Cys314, and Cys288–Cys299. A disordered region spans residues 313 to 335 (ACGPAGRTSSRSQSLRSTDARRR). Over residues 319–329 (RTSSRSQSLRS) the composition is skewed to low complexity. 4 TSP type-1 domains span residues 354 to 407 (DPAA…AVCP), 409 to 462 (HGAW…ALCP), 467 to 520 (DGNW…QQCP), and 522 to 575 (DGKW…QRCP). 14 disulfides stabilise this stretch: Cys366/Cys400, Cys370/Cys406, Cys381/Cys390, Cys421/Cys456, Cys425/Cys461, Cys436/Cys446, Cys479/Cys514, Cys483/Cys519, Cys494/Cys504, Cys534/Cys569, Cys538/Cys574, Cys549/Cys559, Cys581/Cys616, and Cys604/Cys634. N-linked (GlcNAc...) asparagine glycosylation occurs at Asn401. Asn607 carries N-linked (GlcNAc...) asparagine glycosylation. Thr609 is subject to Phosphothreonine. N-linked (GlcNAc...) asparagine glycosylation is found at Asn692, Asn844, Asn877, and Asn881. In terms of domain architecture, GAIN-B spans 760–939 (RDAYQVTDNL…AILAQLSADA (180 aa)). Intrachain disulfides connect Cys884–Cys921 and Cys909–Cys923. The GPS stretch occupies residues 884-939 (CILWDETDVPSSSAPPQLGPWSWRGCRTVPLDALRTRCLCDRLSTFAILAQLSADA). The interval 927–943 (STFAILAQLSADANMEK) is N-terminal stalk following vasculostatin-120 cleavage which is not required for signaling activity. The helical transmembrane segment at 949 to 969 (VTLIVGCGVSSLTLLMLVIIY) threads the bilayer. Residues 970–980 (VSVWRYIRSER) lie on the Cytoplasmic side of the membrane. Residues 981-1001 (SVILINFCLSIISSNALILIG) traverse the membrane as a helical segment. The Extracellular segment spans residues 1002 to 1008 (QTQTRNK). Residues 1009 to 1029 (VVCTLVAAFLHFFFLSSFCWV) traverse the membrane as a helical segment. Residues 1030–1052 (LTEAWQSYMAVTGHLRNRLIRKR) lie on the Cytoplasmic side of the membrane. A helical transmembrane segment spans residues 1053–1073 (FLCLGWGLPALVVAISVGFTK). Residues 1074–1093 (AKGYSTMNYCWLSLEGGLLY) are Extracellular-facing. The chain crosses the membrane as a helical span at residues 1094-1114 (AFVGPAAAVVLVNMVIGILVF). Over 1115 to 1136 (NKLVSKDGITDKKLKERAGASL) the chain is Cytoplasmic. The chain crosses the membrane as a helical span at residues 1137-1157 (WSSCVVLPLLALTWMSAVLAV). Over 1158–1166 (TDRRSALFQ) the chain is Extracellular. A helical membrane pass occupies residues 1167–1187 (ILFAVFDSLEGFVIVMVHCIL). Residues 1188–1584 (RREVQDAVKC…QDIIDLQTEV (397 aa)) lie on the Cytoplasmic side of the membrane. The involved in interaction with MAGI1 stretch occupies residues 1365–1584 (YSIHIDQMPQ…QDIIDLQTEV (220 aa)). Disordered regions lie at residues 1385-1475 (EASL…RRKS) and 1501-1548 (RKLQ…KKEL). Residues 1391–1439 (RSPPSRQPPSGGPPEAPPAQPPPPPPPPPPPPQQPLPPPPNLEPAPPSL) show a composition bias toward pro residues. Polar residues predominate over residues 1453–1469 (TGPSTKNENVATLSVSS). Ser1469 bears the Phosphoserine mark. Over residues 1501 to 1522 (RKLQHAAEKDKEVLGPDSKPEK) the composition is skewed to basic and acidic residues. Positions 1581–1584 (QTEV) are indispensable for interaction with MAGI1.

It belongs to the G-protein coupled receptor 2 family. LN-TM7 subfamily. In terms of assembly, interacts with ELMO1 and DOCK. When bound to ELMO1 and DOCK1, acts as a module to promote apoptotic cell engulfment. Interacts with MDM2; the interaction results in inhibition of MDM2-mediated ubiquitination and degradation of DLG4/PSD95. Interacts with PARD3 and TIAM1; the interaction is required for correct dendritic. localization of PARD3 and TIAM1 and for dendritic spine formation. Interacts with MAGI1. Interacts with MAGI3. Interacts with BAIAP2. Interacts with PHYHIP. Interacts with DLG4 (via PDZ domain). Vasculostatin-120: Interacts with CD36. Vasculostatin-120: Interacts with ARRB2. Interacts with BAIAP3; this interaction is direct. Post-translationally, proteolytically cleaved to produce vasculostatin-40 and vasculostatin-120. Vasculostatin-40 is the major form and is produced through proteolytic cleavage by MMP14 between residues 321 and 329 with cleavage likely to be between Ser-326 and Leu-327. In terms of processing, ubiquitinated. Expressed in brain (at protein level). Expressed on mononuclear phagocytes and monocyte-derived macrophages in the gastric mucosa (at protein level). Expressed in normal pancreatic tissue but not in pancreatic tumor tissue. Reduced or no expression is observed in some glioblastomas.

It localises to the cell membrane. The protein localises to the cell projection. The protein resides in the phagocytic cup. It is found in the cell junction. Its subcellular location is the focal adhesion. It localises to the dendritic spine. The protein localises to the postsynaptic density. The protein resides in the secreted. Phosphatidylserine receptor which enhances the engulfment of apoptotic cells. Also mediates the binding and engulfment of Gram-negative bacteria. Stimulates production of reactive oxygen species by macrophages in response to Gram-negative bacteria, resulting in enhanced microbicidal macrophage activity. In the gastric mucosa, required for recognition and engulfment of apoptotic gastric epithelial cells. Promotes myoblast fusion. Activates the Rho pathway in a G-protein-dependent manner. Inhibits MDM2-mediated ubiquitination and degradation of DLG4/PSD95, promoting DLG4 stability and regulating synaptic plasticity. Required for the formation of dendritic spines by ensuring the correct localization of PARD3 and TIAM1. Potent inhibitor of angiogenesis in brain and may play a significant role as a mediator of the p53/TP53 signal in suppression of glioblastoma. Functionally, inhibits angiogenesis in a CD36-dependent manner. Its function is as follows. Inhibits angiogenesis. This Homo sapiens (Human) protein is Adhesion G protein-coupled receptor B1.